The sequence spans 78 residues: U7-lycotoxin-Ls1d (78 aa).

The first 22 residues, 1 to 22, serve as a signal peptide directing secretion; the sequence is MKLIIFTGLALLLIVSLIDVEA. The propeptide occupies 23-26; the sequence is QNEG.

It belongs to the neurotoxin 19 (CSTX) family. 07 (U7-Lctx) subfamily. Post-translationally, contains 4 disulfide bonds. In terms of tissue distribution, expressed by the venom gland.

It is found in the secreted. The chain is U7-lycotoxin-Ls1d from Lycosa singoriensis (Wolf spider).